We begin with the raw amino-acid sequence, 420 residues long: Serine protease inhibitor A3B (420 aa).

Residues 1-17 (MAFIAALGLLMAEICPA) form the signal peptide. N-linked (GlcNAc...) asparagine glycosylation is found at N104 and N349. An RCL region spans residues 367-392 (GTEGDAITIVGYNFMSAKLKPVFVKF).

It belongs to the serpin family.

Its subcellular location is the secreted. The chain is Serine protease inhibitor A3B (Serpina3b) from Mus musculus (Mouse).